The primary structure comprises 456 residues: Trigger factor (456 aa).

The PPIase FKBP-type domain occupies 192–277 (GDTVVIDFVG…IHEVKTKEVP (86 aa)).

This sequence belongs to the FKBP-type PPIase family. Tig subfamily.

The protein localises to the cytoplasm. The catalysed reaction is [protein]-peptidylproline (omega=180) = [protein]-peptidylproline (omega=0). Its function is as follows. Involved in protein export. Acts as a chaperone by maintaining the newly synthesized protein in an open conformation. Functions as a peptidyl-prolyl cis-trans isomerase. This Streptococcus pyogenes serotype M2 (strain MGAS10270) protein is Trigger factor.